A 347-amino-acid polypeptide reads, in one-letter code: MMASLGGDNSQAEGAEVRHVPVLIAEVIDALKPVSGAVIVDGTFGAGGYTRRILEAGADVIAIDRDPTAIEAGRAMEKQFPGRLDLVESRFSALDEAVSKVKGAGSKVDGVVLDIGVSSMQIDEAERGFSFQKDGPLDMRMSKKGPSAADVVNRLKTGDLARIFNFLGEERHAGRIARMIDKRRTAQPFTRTLDLANAIETLVGRNPKDRIHPATRVFQALRVYVNDELGELARALLAAERILKPGGRLVVVTFHSLEDRMVKRYFADRAGGSAGSRHLPETHVRLPSFTPAVKGAVGPTAEEEERNPRARSAKLRAGIRTENPPLEDDLSLFGLPKLPETNELARS.

S-adenosyl-L-methionine is bound by residues 47–49 (GGY), D64, F91, D114, and Q121. The interval 291–347 (PAVKGAVGPTAEEEERNPRARSAKLRAGIRTENPPLEDDLSLFGLPKLPETNELARS) is disordered.

It belongs to the methyltransferase superfamily. RsmH family.

The protein localises to the cytoplasm. It carries out the reaction cytidine(1402) in 16S rRNA + S-adenosyl-L-methionine = N(4)-methylcytidine(1402) in 16S rRNA + S-adenosyl-L-homocysteine + H(+). Functionally, specifically methylates the N4 position of cytidine in position 1402 (C1402) of 16S rRNA. The protein is Ribosomal RNA small subunit methyltransferase H of Brucella anthropi (strain ATCC 49188 / DSM 6882 / CCUG 24695 / JCM 21032 / LMG 3331 / NBRC 15819 / NCTC 12168 / Alc 37) (Ochrobactrum anthropi).